A 200-amino-acid chain; its full sequence is dITP/XTP pyrophosphatase (200 aa).

19-24 provides a ligand contact to substrate; sequence TSNAGK. The Mg(2+) site is built by Glu-49 and Asp-78. Catalysis depends on Asp-78, which acts as the Proton acceptor. Substrate contacts are provided by residues Ser-79, 158-161, Lys-181, and 186-187; these read FGYD and HR.

It belongs to the HAM1 NTPase family. As to quaternary structure, homodimer. It depends on Mg(2+) as a cofactor.

It carries out the reaction XTP + H2O = XMP + diphosphate + H(+). It catalyses the reaction dITP + H2O = dIMP + diphosphate + H(+). The enzyme catalyses ITP + H2O = IMP + diphosphate + H(+). In terms of biological role, pyrophosphatase that catalyzes the hydrolysis of nucleoside triphosphates to their monophosphate derivatives, with a high preference for the non-canonical purine nucleotides XTP (xanthosine triphosphate), dITP (deoxyinosine triphosphate) and ITP. Seems to function as a house-cleaning enzyme that removes non-canonical purine nucleotides from the nucleotide pool, thus preventing their incorporation into DNA/RNA and avoiding chromosomal lesions. The sequence is that of dITP/XTP pyrophosphatase from Deinococcus radiodurans (strain ATCC 13939 / DSM 20539 / JCM 16871 / CCUG 27074 / LMG 4051 / NBRC 15346 / NCIMB 9279 / VKM B-1422 / R1).